Here is a 353-residue protein sequence, read N- to C-terminus: Stachydrine N-demethylase reductase subunit Stc4 (353 aa).

In terms of domain architecture, FAD-binding FR-type spans 11-114 (SDAEPLECVT…IGPAGKFSIV (104 aa)). Positions 269 to 353 (AEIAFALSGV…KPLRRVSVEA (85 aa)) constitute a 2Fe-2S ferredoxin-type domain. [2Fe-2S] cluster is bound by residues cysteine 303, cysteine 308, cysteine 311, and cysteine 341.

The protein in the N-terminal section; belongs to the FAD-binding oxidoreductase type 6 family. In terms of assembly, the system is probably composed of an oxygenase subunit (Stc2) and two reductase subunits (Stc3 and Stc4). FAD is required as a cofactor. [2Fe-2S] cluster serves as cofactor.

Functionally, reductase involved in the catabolism of stachydrine (L-proline betaine), a source of carbon and nitrogen. Part of a Rieske-type oxygenase system that catalyzes the demethylation of stachydrine to produce N-methyl-L-proline (monomethylproline). This subunit is probably involved in the transfer of electrons from NAD(P)H to the catalytic subunit Stc2. The protein is Stachydrine N-demethylase reductase subunit Stc4 of Rhizobium meliloti (strain 1021) (Ensifer meliloti).